The chain runs to 859 residues: Photoactivated adenylate cyclase subunit beta-like protein FB (859 aa).

The region spanning 56–149 (LRRLMYLSKS…GRMYGDWHMK (94 aa)) is the BLUF 1 domain. The Guanylate cyclase 1 domain occupies 205-333 (VVTFIYLVEF…DCINTTSRIA (129 aa)). Positions 414 to 449 (GLPNSQRPPIFDDTPKANRRPRTPGYGGRQRSDSQV) are disordered. The region spanning 471–563 (LTTLTYISQA…RVYPSEWTLT (93 aa)) is the BLUF 2 domain. The 130-residue stretch at 619 to 748 (VMLATDICSF…AVSARVMEVE (130 aa)) folds into the Guanylate cyclase 2 domain. The segment at 813–859 (AARSGEKPLTEPEAAKPDFRVSPGRVRHGDSGRRSNSAQGKRSIQVR) is disordered. Over residues 815–831 (RSGEKPLTEPEAAKPDF) the composition is skewed to basic and acidic residues. Residues 846–859 (RSNSAQGKRSIQVR) are compositionally biased toward polar residues.

This sequence belongs to the adenylyl cyclase class-4/guanylyl cyclase family. In terms of assembly, heterotetramer of two alpha and two beta subunits.

Its subcellular location is the cell projection. The protein resides in the cilium. It is found in the flagellum. This chain is Photoactivated adenylate cyclase subunit beta-like protein FB, found in Euglena gracilis.